The primary structure comprises 188 residues: Large ribosomal subunit protein bL35m (188 aa).

The protein belongs to the bacterial ribosomal protein bL35 family. In terms of assembly, component of the mitochondrial large ribosomal subunit (mt-LSU). Mature mammalian 55S mitochondrial ribosomes consist of a small (28S) and a large (39S) subunit. The 28S small subunit contains a 12S ribosomal RNA (12S mt-rRNA) and 30 different proteins. The 39S large subunit contains a 16S rRNA (16S mt-rRNA), a copy of mitochondrial valine transfer RNA (mt-tRNA(Val)), which plays an integral structural role, and 52 different proteins.

Its subcellular location is the mitochondrion. This is Large ribosomal subunit protein bL35m (MRPL35) from Homo sapiens (Human).